The primary structure comprises 99 residues: Accessory protein p12I (99 aa).

The chain crosses the membrane as a helical span at residues 3 to 23 (FRLLSPLSPLALTALLLFLLP). 2 short sequence motifs (SH3-binding) span residues 4–11 (RLLSPLSP) and 33–38 (RPPPAP). Residues 48–68 (ILSGLLFLLFLPLFFSLPLLL) traverse the membrane as a helical segment. 2 short sequence motifs (SH3-binding) span residues 70 to 77 (PSLPITMR) and 88 to 93 (KAPSQP). Lys-88 is covalently cross-linked (Glycyl lysine isopeptide (Lys-Gly) (interchain with G-Cter in ubiquitin); in isolate LAF).

Belongs to the HTLV-1 accessory protein p12I family. P12I is a homodimer. Interacts with human CANX, CALR, ATP6V0C, IL2RB, IL2RG. Binds to MHC-I heavy chains HLA-A2, HLA-B7 and HLA-Cw4. Ubiquitinated; a fraction of P12I is degraded via the ubiquitin system.

The protein resides in the host endoplasmic reticulum membrane. The protein localises to the host Golgi apparatus. Its subcellular location is the host cis-Golgi network membrane. Its function is as follows. p12I is a modulator of T-lymphocyte proliferation and immune function and may contribute to establish a persistent infection. Binds and down-modulates cell surface expression of interleukin-2 receptors IL2RB and IL2RG. Also down-modulates cell surface MHC-I molecules by binding to free immature MHC-I heavy chains in the ER and targeting them to the proteasome for degradation. Binding to IL2RB mediates recruitment of JAK1 and JAK3. As a result of this interaction, p12I increases DNA-binding and transcriptional activity of STAT5. This Homo sapiens (Human) protein is Accessory protein p12I.